The chain runs to 183 residues: Probable chemoreceptor glutamine deamidase CheD (183 aa).

It belongs to the CheD family.

It catalyses the reaction L-glutaminyl-[protein] + H2O = L-glutamyl-[protein] + NH4(+). Probably deamidates glutamine residues to glutamate on methyl-accepting chemotaxis receptors (MCPs), playing an important role in chemotaxis. This chain is Probable chemoreceptor glutamine deamidase CheD, found in Rhizobium meliloti (strain 1021) (Ensifer meliloti).